Reading from the N-terminus, the 258-residue chain is Exu regulon transcriptional regulator (258 aa).

One can recognise an HTH gntR-type domain in the interval 7-75 (RRLYQQLAAD…KGSGIHVVSN (69 aa)). The segment at residues 35-54 (ERFIADEKNVSRTVVREAII) is a DNA-binding region (H-T-H motif).

Functionally, repressor for the exu regulon that encode genes involved in hexuronate utilization. It regulates the ExuT, UxaCA and UxuRAB operons. Binds D-tagaturonate and D-fructuronate as inducers. The polypeptide is Exu regulon transcriptional regulator (exuR) (Escherichia coli O157:H7).